The primary structure comprises 609 residues: Sporulation-specific protein 21 (609 aa).

Disordered regions lie at residues methionine 1–serine 50, proline 68–serine 96, and lysine 124–glycine 165. Residues methionine 10–asparagine 31 are compositionally biased toward polar residues. The span at histidine 32–aspartate 43 shows a compositional bias: basic and acidic residues. The segment covering proline 68–serine 81 has biased composition (low complexity). 2 stretches are compositionally biased toward polar residues: residues asparagine 82 to serine 96 and serine 127 to asparagine 136. Residues serine 143–serine 159 show a composition bias toward low complexity. 3 coiled-coil regions span residues arginine 283 to serine 342, arginine 357 to phenylalanine 393, and glutamate 424 to glutamate 483. The interval aspartate 586–lysine 609 is disordered. The span at glutamine 587 to lysine 609 shows a compositional bias: polar residues.

This sequence belongs to the MPC70 family. As to quaternary structure, interacts directly with MPC54, NUD1 and SPC42. Interacts with ADY3. Interacts with ADY4. Probable component of a SPB complex composed of ADY3, SSP1, DON1, MPC54, SPO21/MPC70, NUD1 and CNM67.

The protein resides in the prospore membrane. Its subcellular location is the cytoplasm. The protein localises to the cytoskeleton. It localises to the spindle pole. Involved in the pathway that organizes the shaping and sizing of the prospore membrane (PSM) during sporulation. May provide a meiosis-specific scaffold for the assembly of other proteins on spindle pole bodies (SPBs), and may be a limiting component for SPB formation. This chain is Sporulation-specific protein 21 (SPO21), found in Saccharomyces cerevisiae (strain ATCC 204508 / S288c) (Baker's yeast).